The chain runs to 222 residues: NAD(P)H-hydrate epimerase (222 aa).

Residues 9–209 (MQQIDSYTIE…DIGLRLPEDF (201 aa)) enclose the YjeF N-terminal domain. Residue 57–61 (NNGAD) participates in (6S)-NADPHX binding. Asparagine 58 and aspartate 119 together coordinate K(+). (6S)-NADPHX is bound by residues 123 to 129 (GVGLNNT) and aspartate 152. Threonine 155 lines the K(+) pocket.

This sequence belongs to the NnrE/AIBP family. It depends on K(+) as a cofactor.

It carries out the reaction (6R)-NADHX = (6S)-NADHX. The catalysed reaction is (6R)-NADPHX = (6S)-NADPHX. In terms of biological role, catalyzes the epimerization of the S- and R-forms of NAD(P)HX, a damaged form of NAD(P)H that is a result of enzymatic or heat-dependent hydration. This is a prerequisite for the S-specific NAD(P)H-hydrate dehydratase to allow the repair of both epimers of NAD(P)HX. The sequence is that of NAD(P)H-hydrate epimerase from Leuconostoc citreum (strain KM20).